Here is a 357-residue protein sequence, read N- to C-terminus: Glucose-6-phosphatase catalytic subunit 1 (357 aa).

The Lumenal portion of the chain corresponds to 1-28 (MEKGMDVLHDFGIQSTHYLQVNYQDSQD). Residues 29–49 (WFILVSVIADLRNAFYVLFPI) form a helical membrane-spanning segment. Residues 50 to 60 (WFHLREAVGIK) are Cytoplasmic-facing. Residues 61–81 (LLWVAVIGDWLNLVFKWILFG) traverse the membrane as a helical segment. Over 82–117 (QRPYWWVMDTDYYSNTSVPLIKQFPVTCETGPGSPS) the chain is Lumenal. Substrate is bound at residue Arg83. Asn96 is a glycosylation site (N-linked (GlcNAc...) asparagine). A helical transmembrane segment spans residues 118 to 138 (GHAMGTAGVYYVMVTSTLSIF). The active-site Proton donor is His119. The Cytoplasmic segment spans residues 139–147 (RGRKRPTYR). Residues 148 to 168 (FRCLNILLWLGFWAVQLNVCL) form a helical membrane-spanning segment. Residues 169-170 (SR) lie on the Lumenal side of the membrane. Arg170 is a binding site for substrate. A helical membrane pass occupies residues 171–191 (IYLAAHFPHQVVAGVLSGIAV). His176 acts as the Nucleophile in catalysis. Topologically, residues 192–209 (AETFRHIQSIYNASLKKY) are cytoplasmic. A helical membrane pass occupies residues 210-230 (FLITFFLFSFAIGFYLLLKGL). Topologically, residues 231–254 (GVDLLWTLEKARRWCERPEWVHID) are lumenal. Residues 255-275 (TTPFASLLKNVGTLFGLGVTL) form a helical membrane-spanning segment. Residues 276–291 (NSSMYRESCKGKLSKW) are Cytoplasmic-facing. A helical membrane pass occupies residues 292–312 (FPFRLSCIVVSLILLHLFDSL). Over 313-320 (KPPSQTEL) the chain is Lumenal. A helical membrane pass occupies residues 321 to 341 (IFYTLSFCKSAAVPLASVSLI). Over 342–357 (PYCLARVFDQPDKKSL) the chain is Cytoplasmic. The Prevents secretion from ER motif lies at 354–357 (KKSL).

Belongs to the glucose-6-phosphatase family.

The protein resides in the endoplasmic reticulum membrane. It carries out the reaction D-glucose 6-phosphate + H2O = D-glucose + phosphate. It participates in carbohydrate biosynthesis; gluconeogenesis. Functionally, hydrolyzes glucose-6-phosphate to glucose in the endoplasmic reticulum. Forms with the glucose-6-phosphate transporter (SLC37A4/G6PT) the complex responsible for glucose production in the terminal step of glycogenolysis and gluconeogenesis. Hence, it is the key enzyme in homeostatic regulation of blood glucose levels. The chain is Glucose-6-phosphatase catalytic subunit 1 (G6PC1) from Canis lupus familiaris (Dog).